Reading from the N-terminus, the 562-residue chain is Adenylate kinase isoenzyme 5 (562 aa).

2 adenylate kinase regions span residues 133–316 and 377–559; these read KIIL…MAVD and KIIF…TAID. 142–147 lines the ATP pocket; sequence GSGKGT. The NMP 1 stretch occupies residues 162-193; the sequence is SVGELLRKKIHSTSSNRKWSLIAKIITTGELA. AMP is bound by residues R168, 191-193, 219-222, and Q226; these read ELA and GFPR. The tract at residues 256–266 is LID 1; the sequence is KRAEQQGRPDD. ATP is bound at residue R257. The AMP site is built by R263 and R274. 386–391 is a binding site for ATP; that stretch reads GSGKGT. The segment at 406–435 is NMP 2; that stretch reads STGELLREELASESERSKLIRDIMERGDLV. Residues T407, R412, 433–435, 462–465, and Q469 each bind AMP; these read DLV and GYPR. The LID 2 stretch occupies residues 499–509; that stretch reads QRSRSSLPVDD. Residue R500 coordinates ATP. R517 is an AMP binding site. G545 contacts ATP.

The protein belongs to the adenylate kinase family. As to quaternary structure, monomer. Interacts with YWHAZ. As to expression, brain specific.

Its subcellular location is the cytoplasm. The enzyme catalyses AMP + ATP = 2 ADP. The catalysed reaction is a 2'-deoxyribonucleoside 5'-diphosphate + ATP = a 2'-deoxyribonucleoside 5'-triphosphate + ADP. It catalyses the reaction a ribonucleoside 5'-diphosphate + ATP = a ribonucleoside 5'-triphosphate + ADP. Nucleoside monophosphate (NMP) kinase that catalyzes the reversible transfer of the terminal phosphate group between nucleoside triphosphates and monophosphates. Active on AMP and dAMP with ATP as a donor. When GTP is used as phosphate donor, the enzyme phosphorylates AMP, CMP, and to a small extent dCMP. Also displays broad nucleoside diphosphate kinase activity. This is Adenylate kinase isoenzyme 5 (AK5) from Homo sapiens (Human).